We begin with the raw amino-acid sequence, 106 residues long: Large ribosomal subunit protein uL24 (106 aa).

The protein belongs to the universal ribosomal protein uL24 family. In terms of assembly, part of the 50S ribosomal subunit.

One of two assembly initiator proteins, it binds directly to the 5'-end of the 23S rRNA, where it nucleates assembly of the 50S subunit. Functionally, one of the proteins that surrounds the polypeptide exit tunnel on the outside of the subunit. This chain is Large ribosomal subunit protein uL24, found in Albidiferax ferrireducens (strain ATCC BAA-621 / DSM 15236 / T118) (Rhodoferax ferrireducens).